Reading from the N-terminus, the 132-residue chain is MSLSDPIADMLTRIRNAQQAKHELCVIPGSKIKKSILDLLKEEGFVDDVQTVKNGSFDDFQVKLKYDTEKKPVIRMIERVSTPGRRVYIQSGEIRPFRNNIGTLILSTSKGVMTGKRARKLRVGGEVLCKVF.

It belongs to the universal ribosomal protein uS8 family. As to quaternary structure, part of the 30S ribosomal subunit. Contacts proteins S5 and S12.

Functionally, one of the primary rRNA binding proteins, it binds directly to 16S rRNA central domain where it helps coordinate assembly of the platform of the 30S subunit. The sequence is that of Small ribosomal subunit protein uS8 from Leptospira biflexa serovar Patoc (strain Patoc 1 / Ames).